The chain runs to 366 residues: Outer membrane protein IIIA (366 aa).

A signal peptide spans 1 to 22 (MNIRMVLLASAAAFAASTPVLA).

Belongs to the alphaproteobacteria porin family. As to quaternary structure, forms calcium-stabilized oligomers. Post-translationally, attached covalently to peptidoglycan.

It localises to the cell outer membrane. May act as an outer membrane pore. The polypeptide is Outer membrane protein IIIA (ropA) (Rhizobium leguminosarum bv. viciae).